The following is a 618-amino-acid chain: 1-deoxy-D-xylulose-5-phosphate synthase (618 aa).

Residues H70 and 111 to 113 (GHS) contribute to the thiamine diphosphate site. D142 is a Mg(2+) binding site. Thiamine diphosphate contacts are provided by residues 143-144 (GS), N171, Y278, and E360. Residue N171 coordinates Mg(2+).

The protein belongs to the transketolase family. DXPS subfamily. Homodimer. It depends on Mg(2+) as a cofactor. The cofactor is thiamine diphosphate.

It catalyses the reaction D-glyceraldehyde 3-phosphate + pyruvate + H(+) = 1-deoxy-D-xylulose 5-phosphate + CO2. Its pathway is metabolic intermediate biosynthesis; 1-deoxy-D-xylulose 5-phosphate biosynthesis; 1-deoxy-D-xylulose 5-phosphate from D-glyceraldehyde 3-phosphate and pyruvate: step 1/1. Catalyzes the acyloin condensation reaction between C atoms 2 and 3 of pyruvate and glyceraldehyde 3-phosphate to yield 1-deoxy-D-xylulose-5-phosphate (DXP). The polypeptide is 1-deoxy-D-xylulose-5-phosphate synthase (Helicobacter pylori (strain J99 / ATCC 700824) (Campylobacter pylori J99)).